The sequence spans 194 residues: High mobility group protein B4 (194 aa).

2 DNA-binding regions (HMG box) span residues 9–79 (PKAN…MNYF) and 93–161 (PRRP…SVYR).

Belongs to the HMGB family.

It is found in the nucleus. Its subcellular location is the chromosome. The protein is High mobility group protein B4 (HMGB4) of Bos taurus (Bovine).